The primary structure comprises 227 residues: Cytochrome c oxidase subunit 2 (227 aa).

Residues 1–14 (MAYPFQLGLQDATS) are Mitochondrial intermembrane-facing. A helical transmembrane segment spans residues 15–45 (PIMEELTNFHDHTLMIVFLISSLVLYIISLM). The Mitochondrial matrix portion of the chain corresponds to 46-59 (LTTKLTHTSTMDAQ). Residues 60–87 (EVETIWTILPAVILILIALPSLRILYMM) traverse the membrane as a helical segment. The Mitochondrial intermembrane portion of the chain corresponds to 88 to 227 (DEINNPALTV…YFENWSASMI (140 aa)). Cu cation contacts are provided by His-161, Cys-196, Glu-198, Cys-200, His-204, and Met-207. A Mg(2+)-binding site is contributed by Glu-198. Tyr-218 bears the Phosphotyrosine mark.

Belongs to the cytochrome c oxidase subunit 2 family. In terms of assembly, component of the cytochrome c oxidase (complex IV, CIV), a multisubunit enzyme composed of 14 subunits. The complex is composed of a catalytic core of 3 subunits MT-CO1, MT-CO2 and MT-CO3, encoded in the mitochondrial DNA, and 11 supernumerary subunits COX4I, COX5A, COX5B, COX6A, COX6B, COX6C, COX7A, COX7B, COX7C, COX8 and NDUFA4, which are encoded in the nuclear genome. The complex exists as a monomer or a dimer and forms supercomplexes (SCs) in the inner mitochondrial membrane with NADH-ubiquinone oxidoreductase (complex I, CI) and ubiquinol-cytochrome c oxidoreductase (cytochrome b-c1 complex, complex III, CIII), resulting in different assemblies (supercomplex SCI(1)III(2)IV(1) and megacomplex MCI(2)III(2)IV(2)). Found in a complex with TMEM177, COA6, COX18, COX20, SCO1 and SCO2. Interacts with TMEM177 in a COX20-dependent manner. Interacts with COX20. Interacts with COX16. Requires Cu cation as cofactor.

The protein resides in the mitochondrion inner membrane. The enzyme catalyses 4 Fe(II)-[cytochrome c] + O2 + 8 H(+)(in) = 4 Fe(III)-[cytochrome c] + 2 H2O + 4 H(+)(out). Component of the cytochrome c oxidase, the last enzyme in the mitochondrial electron transport chain which drives oxidative phosphorylation. The respiratory chain contains 3 multisubunit complexes succinate dehydrogenase (complex II, CII), ubiquinol-cytochrome c oxidoreductase (cytochrome b-c1 complex, complex III, CIII) and cytochrome c oxidase (complex IV, CIV), that cooperate to transfer electrons derived from NADH and succinate to molecular oxygen, creating an electrochemical gradient over the inner membrane that drives transmembrane transport and the ATP synthase. Cytochrome c oxidase is the component of the respiratory chain that catalyzes the reduction of oxygen to water. Electrons originating from reduced cytochrome c in the intermembrane space (IMS) are transferred via the dinuclear copper A center (CU(A)) of subunit 2 and heme A of subunit 1 to the active site in subunit 1, a binuclear center (BNC) formed by heme A3 and copper B (CU(B)). The BNC reduces molecular oxygen to 2 water molecules using 4 electrons from cytochrome c in the IMS and 4 protons from the mitochondrial matrix. This chain is Cytochrome c oxidase subunit 2 (MT-CO2), found in Oenomys hypoxanthus (Rufous-nosed rat).